The sequence spans 88 residues: Small ribosomal subunit protein uS15c (88 aa).

It belongs to the universal ribosomal protein uS15 family. As to quaternary structure, part of the 30S ribosomal subunit.

The protein resides in the plastid. It is found in the chloroplast. The chain is Small ribosomal subunit protein uS15c (rps15) from Pinus koraiensis (Korean pine).